Consider the following 71-residue polypeptide: Large ribosomal subunit protein bL31 (71 aa).

Zn(2+) is bound by residues C16, C18, C36, and C39.

This sequence belongs to the bacterial ribosomal protein bL31 family. Type A subfamily. As to quaternary structure, part of the 50S ribosomal subunit. Requires Zn(2+) as cofactor.

Its function is as follows. Binds the 23S rRNA. This is Large ribosomal subunit protein bL31 from Petrotoga mobilis (strain DSM 10674 / SJ95).